The chain runs to 212 residues: 3-isopropylmalate dehydratase small subunit (212 aa).

This sequence belongs to the LeuD family. LeuD type 1 subfamily. In terms of assembly, heterodimer of LeuC and LeuD.

The enzyme catalyses (2R,3S)-3-isopropylmalate = (2S)-2-isopropylmalate. The protein operates within amino-acid biosynthesis; L-leucine biosynthesis; L-leucine from 3-methyl-2-oxobutanoate: step 2/4. In terms of biological role, catalyzes the isomerization between 2-isopropylmalate and 3-isopropylmalate, via the formation of 2-isopropylmaleate. This is 3-isopropylmalate dehydratase small subunit from Laribacter hongkongensis (strain HLHK9).